The sequence spans 776 residues: ADP-ribosylation factor GTPase-activating protein AGD2 (776 aa).

One can recognise a BAR domain in the interval alanine 2–glutamine 226. Positions glutamine 248–glycine 267 are disordered. One can recognise a PH domain in the interval glutamate 290–threonine 421. Positions aspartate 467 to alanine 604 constitute an Arf-GAP domain. Residues cysteine 482–cysteine 505 form a C4-type zinc finger. 2 ANK repeats span residues glutamine 683–methionine 712 and histidine 716–isoleucine 745.

In terms of tissue distribution, expressed in roots, hypocotyls, cotyledons, leaf and shoot apical meristems and siliques.

Probable GTPase-activating protein. The chain is ADP-ribosylation factor GTPase-activating protein AGD2 (AGD2) from Arabidopsis thaliana (Mouse-ear cress).